Reading from the N-terminus, the 254-residue chain is N(G),N(G)-dimethylarginine dimethylaminohydrolase (254 aa).

Residues leucine 18, aspartate 60, 65–66 (ED), arginine 85, and arginine 132 contribute to the substrate site. Histidine 162 acts as the Proton donor in catalysis. Zn(2+) is bound at residue histidine 162. Isoleucine 243 provides a ligand contact to substrate. Residue cysteine 249 participates in Zn(2+) binding. Cysteine 249 serves as the catalytic Nucleophile.

It belongs to the DDAH family. As to quaternary structure, homodimer.

It carries out the reaction N(omega),N(omega)-dimethyl-L-arginine + H2O = dimethylamine + L-citrulline. The enzyme catalyses N(omega)-methyl-L-arginine + H2O = L-citrulline + methylamine. Its activity is regulated as follows. Inhibited by zinc ions. Competitively inhibited by lysine. Hydrolyzes N(G),N(G)-dimethyl-L-arginine (ADMA) and N(G)-monomethyl-L-arginine (MMA). In Pseudomonas aeruginosa (strain ATCC 15692 / DSM 22644 / CIP 104116 / JCM 14847 / LMG 12228 / 1C / PRS 101 / PAO1), this protein is N(G),N(G)-dimethylarginine dimethylaminohydrolase.